Consider the following 104-residue polypeptide: N(4)-acetylcytidine amidohydrolase (104 aa).

One can recognise an ASCH domain in the interval 7–95 (MTFFERFETD…IQDIYPGISQ (89 aa)). Residue K22 is the Proton acceptor of the active site. The Nucleophile role is filled by T25. The active-site Proton donor is E75.

Belongs to the N(4)-acetylcytidine amidohydrolase family.

It carries out the reaction N(4)-acetylcytidine + H2O = cytidine + acetate + H(+). The catalysed reaction is N(4)-acetyl-2'-deoxycytidine + H2O = 2'-deoxycytidine + acetate + H(+). The enzyme catalyses N(4)-acetylcytosine + H2O = cytosine + acetate + H(+). Catalyzes the hydrolysis of N(4)-acetylcytidine (ac4C). In Vibrio atlanticus (strain LGP32) (Vibrio splendidus (strain Mel32)), this protein is N(4)-acetylcytidine amidohydrolase.